The sequence spans 597 residues: DNA ligase (597 aa).

E262 provides a ligand contact to ATP. The active-site N6-AMP-lysine intermediate is the K264. The ATP site is built by R269, R284, E314, F354, R431, and K437.

This sequence belongs to the ATP-dependent DNA ligase family. It depends on Mg(2+) as a cofactor. Mn(2+) is required as a cofactor.

The enzyme catalyses ATP + (deoxyribonucleotide)n-3'-hydroxyl + 5'-phospho-(deoxyribonucleotide)m = (deoxyribonucleotide)n+m + AMP + diphosphate.. It catalyses the reaction ADP + (deoxyribonucleotide)n-3'-hydroxyl + 5'-phospho-(deoxyribonucleotide)m = (deoxyribonucleotide)n+m + AMP + phosphate.. The catalysed reaction is GTP + (deoxyribonucleotide)n-3'-hydroxyl + 5'-phospho-(deoxyribonucleotide)m = (deoxyribonucleotide)n+m + GMP + diphosphate.. With respect to regulation, inhibited by Ca(2+) and Zn(2+). Functionally, DNA ligase that seals nicks in double-stranded DNA during DNA replication, DNA recombination and DNA repair. Can use both ATP and ADP. This chain is DNA ligase, found in Staphylothermus marinus (strain ATCC 43588 / DSM 3639 / JCM 9404 / F1).